Here is a 307-residue protein sequence, read N- to C-terminus: Cysteine synthase (307 aa).

K42 carries the N6-(pyridoxal phosphate)lysine modification. Residues N72, 176 to 180, and S263 each bind pyridoxal 5'-phosphate; that span reads GTGGH.

The protein belongs to the cysteine synthase/cystathionine beta-synthase family. Pyridoxal 5'-phosphate serves as cofactor.

It carries out the reaction O-acetyl-L-serine + hydrogen sulfide = L-cysteine + acetate. It participates in amino-acid biosynthesis; L-cysteine biosynthesis; L-cysteine from L-serine: step 2/2. This chain is Cysteine synthase (cysK), found in Flavobacterium sp. (strain K3-15 / DSM ID92-509).